The following is a 308-amino-acid chain: tRNA dimethylallyltransferase (308 aa).

14-21 (GPTASGKT) contacts ATP. 16 to 21 (TASGKT) lines the substrate pocket. 3 interaction with substrate tRNA regions span residues 39–42 (DSAL), 163–167 (QRLSR), and 244–249 (RCVGYR).

It belongs to the IPP transferase family. As to quaternary structure, monomer. It depends on Mg(2+) as a cofactor.

The catalysed reaction is adenosine(37) in tRNA + dimethylallyl diphosphate = N(6)-dimethylallyladenosine(37) in tRNA + diphosphate. In terms of biological role, catalyzes the transfer of a dimethylallyl group onto the adenine at position 37 in tRNAs that read codons beginning with uridine, leading to the formation of N6-(dimethylallyl)adenosine (i(6)A). This chain is tRNA dimethylallyltransferase, found in Shewanella loihica (strain ATCC BAA-1088 / PV-4).